Consider the following 417-residue polypeptide: uncharacterized protein (417 aa).

This sequence to M.tuberculosis Rv2067c.

This is an uncharacterized protein from Synechococcus sp. (strain ATCC 27144 / PCC 6301 / SAUG 1402/1) (Anacystis nidulans).